Consider the following 147-residue polypeptide: S-protein homolog 10 (147 aa).

The N-terminal stretch at 1–20 (MNCFSYFFLVIILCAGLNNA) is a signal peptide.

The protein belongs to the plant self-incompatibility (S1) protein family.

It is found in the secreted. This Arabidopsis thaliana (Mouse-ear cress) protein is S-protein homolog 10.